We begin with the raw amino-acid sequence, 236 residues long: Leucyl/phenylalanyl-tRNA--protein transferase (236 aa).

It belongs to the L/F-transferase family.

It localises to the cytoplasm. It catalyses the reaction N-terminal L-lysyl-[protein] + L-leucyl-tRNA(Leu) = N-terminal L-leucyl-L-lysyl-[protein] + tRNA(Leu) + H(+). The catalysed reaction is N-terminal L-arginyl-[protein] + L-leucyl-tRNA(Leu) = N-terminal L-leucyl-L-arginyl-[protein] + tRNA(Leu) + H(+). It carries out the reaction L-phenylalanyl-tRNA(Phe) + an N-terminal L-alpha-aminoacyl-[protein] = an N-terminal L-phenylalanyl-L-alpha-aminoacyl-[protein] + tRNA(Phe). Its function is as follows. Functions in the N-end rule pathway of protein degradation where it conjugates Leu, Phe and, less efficiently, Met from aminoacyl-tRNAs to the N-termini of proteins containing an N-terminal arginine or lysine. The chain is Leucyl/phenylalanyl-tRNA--protein transferase from Vibrio atlanticus (strain LGP32) (Vibrio splendidus (strain Mel32)).